A 350-amino-acid polypeptide reads, in one-letter code: DNA-directed RNA polymerase subunit alpha (350 aa).

The alpha N-terminal domain (alpha-NTD) stretch occupies residues 1 to 226 (MLISQRPTLS…ELFGLARELN (226 aa)). Residues 241-350 (ADQAAHFALP…NQDYAETEQL (110 aa)) form an alpha C-terminal domain (alpha-CTD) region. The segment at 328–350 (GTWNSDAGYDLEDNQDYAETEQL) is disordered. Acidic residues predominate over residues 336–350 (YDLEDNQDYAETEQL).

This sequence belongs to the RNA polymerase alpha chain family. In terms of assembly, homodimer. The RNAP catalytic core consists of 2 alpha, 1 beta, 1 beta' and 1 omega subunit. When a sigma factor is associated with the core the holoenzyme is formed, which can initiate transcription.

The enzyme catalyses RNA(n) + a ribonucleoside 5'-triphosphate = RNA(n+1) + diphosphate. Its function is as follows. DNA-dependent RNA polymerase catalyzes the transcription of DNA into RNA using the four ribonucleoside triphosphates as substrates. The polypeptide is DNA-directed RNA polymerase subunit alpha (Mycolicibacterium vanbaalenii (strain DSM 7251 / JCM 13017 / BCRC 16820 / KCTC 9966 / NRRL B-24157 / PYR-1) (Mycobacterium vanbaalenii)).